We begin with the raw amino-acid sequence, 236 residues long: tRNA (guanine-N(7)-)-methyltransferase (236 aa).

Positions 35, 60, 87, and 113 each coordinate S-adenosyl-L-methionine. Asp-113 is a catalytic residue. Substrate-binding residues include Lys-117 and Asp-149.

Belongs to the class I-like SAM-binding methyltransferase superfamily. TrmB family.

The enzyme catalyses guanosine(46) in tRNA + S-adenosyl-L-methionine = N(7)-methylguanosine(46) in tRNA + S-adenosyl-L-homocysteine. The protein operates within tRNA modification; N(7)-methylguanine-tRNA biosynthesis. Catalyzes the formation of N(7)-methylguanine at position 46 (m7G46) in tRNA. This Prochlorococcus marinus (strain MIT 9313) protein is tRNA (guanine-N(7)-)-methyltransferase.